Reading from the N-terminus, the 107-residue chain is MSISLTESAAQRVSSFLSHRGKGVGLRLGVRTSGCSGMAYLLEFADMINEDDTVFEDKGVKVIVDGKSMVYLDGTELDFVKEGLNEGFKFNNPNVSSECGCGESFNV.

3 residues coordinate Fe cation: Cys-35, Cys-99, and Cys-101.

This sequence belongs to the HesB/IscA family. In terms of assembly, homodimer; may form tetramers and higher multimers. Fe cation is required as a cofactor.

In terms of biological role, is able to transfer iron-sulfur clusters to apo-ferredoxin. Multiple cycles of [2Fe2S] cluster formation and transfer are observed, suggesting that IscA acts catalytically. Recruits intracellular free iron so as to provide iron for the assembly of transient iron-sulfur cluster in IscU in the presence of IscS, L-cysteine and the thioredoxin reductase system TrxA/TrxB. The polypeptide is Iron-binding protein IscA (Photorhabdus laumondii subsp. laumondii (strain DSM 15139 / CIP 105565 / TT01) (Photorhabdus luminescens subsp. laumondii)).